Consider the following 162-residue polypeptide: Balbiani ring protein 2 (162 aa).

The tract at residues 1-31 is last constant region; the sequence is CDDAMRKTESDKCTNIGGKFDPSTCKCTPET. The last Cys-1 repeat stretch occupies residues 32-51; sequence VTEGPTTCLESSESDEVTTK. Positions 52–162 are unique region; that stretch reads KPCDCTCAPD…VKGLEDILNS (111 aa).

In terms of tissue distribution, salivary gland.

The protein localises to the secreted. Used by the larvae to construct a supramolecular structure, the larval tube. In Chironomus pallidivittatus (Midge), this protein is Balbiani ring protein 2 (BR2).